A 191-amino-acid polypeptide reads, in one-letter code: Fe/S biogenesis protein NfuA (191 aa).

Positions 149 and 152 each coordinate [4Fe-4S] cluster.

The protein belongs to the NfuA family. As to quaternary structure, homodimer. The cofactor is [4Fe-4S] cluster.

In terms of biological role, involved in iron-sulfur cluster biogenesis. Binds a 4Fe-4S cluster, can transfer this cluster to apoproteins, and thereby intervenes in the maturation of Fe/S proteins. Could also act as a scaffold/chaperone for damaged Fe/S proteins. This Yersinia enterocolitica serotype O:8 / biotype 1B (strain NCTC 13174 / 8081) protein is Fe/S biogenesis protein NfuA.